Reading from the N-terminus, the 89-residue chain is Protein S100-A8 (89 aa).

An N-acetylalanine modification is found at Ala-2. EF-hand domains follow at residues 13–48 (IEVYHNYSGIKGNHHALYRDDFRKMVTTECPQFVQN) and 46–81 (VQNKNTESLFKELDVNSDNAINFEEFLVLVIRVGVA). Residues His-17 and His-27 each coordinate Zn(2+). Asp-33 provides a ligand contact to Ca(2+). Cys-42 is subject to S-nitrosocysteine. Positions 59, 61, 63, and 70 each coordinate Ca(2+). His-83 lines the Zn(2+) pocket.

It belongs to the S-100 family. Homodimer. Preferentially exists as a heterodimer or heterotetramer with S100A9 known as calprotectin (S100A8/A9). S100A8 interacts with AGER, ATP2A2 and with the heterodimeric complex formed by TLR4 and LY96. Calprotectin (S100A8/9) interacts with CEACAM3 and tubulin filaments in a calcium-dependent manner. Heterotetrameric calprotectin (S100A8/A9) interacts with ANXA6 and associates with tubulin filaments in activated monocytes. S100A8 and calprotectin (S100A8/9) interact with NCF2/P67PHOX, RAC1 and RAC2. Calprotectin (S100A8/9) interacts with CYBA and CYBB. Calprotectin (S100A8/9) interacts with NOS2 to form the iNOS-S100A8/A9 transnitrosylase complex. Calprotectin (S100A8/9) interacts with CD69.

It is found in the secreted. The protein localises to the cytoplasm. Its subcellular location is the cytoskeleton. It localises to the cell membrane. Its function is as follows. S100A8 is a calcium- and zinc-binding protein which plays a prominent role in the regulation of inflammatory processes and immune response. It can induce neutrophil chemotaxis and adhesion. Predominantly found as calprotectin (S100A8/A9) which has a wide plethora of intra- and extracellular functions. The intracellular functions include: facilitating leukocyte arachidonic acid trafficking and metabolism, modulation of the tubulin-dependent cytoskeleton during migration of phagocytes and activation of the neutrophilic NADPH-oxidase. Also participates in regulatory T-cell differentiation together with CD69. Activates NADPH-oxidase by facilitating the enzyme complex assembly at the cell membrane, transferring arachidonic acid, an essential cofactor, to the enzyme complex and S100A8 contributes to the enzyme assembly by directly binding to NCF2/P67PHOX. The extracellular functions involve pro-inflammatory, antimicrobial, oxidant-scavenging and apoptosis-inducing activities. Its pro-inflammatory activity includes recruitment of leukocytes, promotion of cytokine and chemokine production, and regulation of leukocyte adhesion and migration. Acts as an alarmin or a danger associated molecular pattern (DAMP) molecule and stimulates innate immune cells via binding to pattern recognition receptors such as Toll-like receptor 4 (TLR4) and receptor for advanced glycation endproducts (AGER). Binding to TLR4 and AGER activates the MAP-kinase and NF-kappa-B signaling pathways resulting in the amplification of the pro-inflammatory cascade. Has antimicrobial activity towards bacteria and fungi and exerts its antimicrobial activity probably via chelation of Zn(2+) which is essential for microbial growth. Can induce cell death via autophagy and apoptosis and this occurs through the cross-talk of mitochondria and lysosomes via reactive oxygen species (ROS) and the process involves BNIP3. Can regulate neutrophil number and apoptosis by an anti-apoptotic effect; regulates cell survival via ITGAM/ITGB and TLR4 and a signaling mechanism involving MEK-ERK. Its role as an oxidant scavenger has a protective role in preventing exaggerated tissue damage by scavenging oxidants. The iNOS-S100A8/A9 transnitrosylase complex is proposed to direct selective inflammatory stimulus-dependent S-nitrosylation of multiple targets such as GAPDH, ANXA5, EZR, MSN and VIM by recognizing a [IL]-x-C-x-x-[DE] motif; S100A8 seems to contribute to S-nitrosylation site selectivity. The protein is Protein S100-A8 (S100a8) of Rattus norvegicus (Rat).